Reading from the N-terminus, the 139-residue chain is Translation initiation factor 2 subunit beta (139 aa).

This sequence belongs to the eIF-2-beta/eIF-5 family. Heterotrimer composed of an alpha, a beta and a gamma chain.

EIF-2 functions in the early steps of protein synthesis by forming a ternary complex with GTP and initiator tRNA. The sequence is that of Translation initiation factor 2 subunit beta from Sulfurisphaera tokodaii (strain DSM 16993 / JCM 10545 / NBRC 100140 / 7) (Sulfolobus tokodaii).